A 327-amino-acid chain; its full sequence is Methionyl-tRNA formyltransferase (327 aa).

121–124 (SLLP) is a binding site for (6S)-5,6,7,8-tetrahydrofolate.

The protein belongs to the Fmt family.

It carries out the reaction L-methionyl-tRNA(fMet) + (6R)-10-formyltetrahydrofolate = N-formyl-L-methionyl-tRNA(fMet) + (6S)-5,6,7,8-tetrahydrofolate + H(+). Attaches a formyl group to the free amino group of methionyl-tRNA(fMet). The formyl group appears to play a dual role in the initiator identity of N-formylmethionyl-tRNA by promoting its recognition by IF2 and preventing the misappropriation of this tRNA by the elongation apparatus. This chain is Methionyl-tRNA formyltransferase, found in Burkholderia ambifaria (strain MC40-6).